The chain runs to 82 residues: Small ribosomal subunit protein bS16 (82 aa).

It belongs to the bacterial ribosomal protein bS16 family.

The chain is Small ribosomal subunit protein bS16 from Gloeothece citriformis (strain PCC 7424) (Cyanothece sp. (strain PCC 7424)).